A 201-amino-acid polypeptide reads, in one-letter code: Sterile alpha motif domain-containing protein 12 (201 aa).

One can recognise an SAM domain in the interval 77–143 (WTQQDVCKWL…LQQVLQLKVR (67 aa)).

This Pongo abelii (Sumatran orangutan) protein is Sterile alpha motif domain-containing protein 12 (SAMD12).